The following is a 686-amino-acid chain: LEAF RUST 10 DISEASE-RESISTANCE LOCUS RECEPTOR-LIKE PROTEIN KINASE-like 1.3 (686 aa).

An N-terminal signal peptide occupies residues 1 to 33 (MFSPVLFRFSKPNSFLVLLFFLSYIHFLPCAQS). Residues 34-264 (QREPCDTLFR…AGLSKKGKIG (231 aa)) are Extracellular-facing. 5 N-linked (GlcNAc...) asparagine glycosylation sites follow: Asn-76, Asn-93, Asn-175, Asn-190, and Asn-236. The chain crosses the membrane as a helical span at residues 265–285 (IGFASGFLGATLIGGCLLCIF). The Cytoplasmic segment spans residues 286 to 686 (IRRRKKLATQ…SSSNTTASSF (401 aa)). One can recognise a Protein kinase domain in the interval 358–633 (ENFSKELGDG…DEIVEVLRVI (276 aa)). ATP-binding positions include 364–372 (LGDGGFGTV) and Lys-386. Position 432 is a phosphotyrosine (Tyr-432). Asp-482 (proton acceptor) is an active-site residue. Ser-515 carries the post-translational modification Phosphoserine. Thr-516 and Thr-521 each carry phosphothreonine. Tyr-529 is modified (phosphotyrosine). Residues 657-686 (GLLKHGVPPPLSPETDKTTASSSNTTASSF) form a disordered region. Residues 674–686 (TTASSSNTTASSF) show a composition bias toward low complexity.

Belongs to the protein kinase superfamily. Ser/Thr protein kinase family.

The protein localises to the cell membrane. The enzyme catalyses L-seryl-[protein] + ATP = O-phospho-L-seryl-[protein] + ADP + H(+). It carries out the reaction L-threonyl-[protein] + ATP = O-phospho-L-threonyl-[protein] + ADP + H(+). In Arabidopsis thaliana (Mouse-ear cress), this protein is LEAF RUST 10 DISEASE-RESISTANCE LOCUS RECEPTOR-LIKE PROTEIN KINASE-like 1.3.